The primary structure comprises 79 residues: Acyl carrier protein (79 aa).

The Carrier domain maps to S2 to S77. Residue S37 is modified to O-(pantetheine 4'-phosphoryl)serine.

This sequence belongs to the acyl carrier protein (ACP) family. Post-translationally, 4'-phosphopantetheine is transferred from CoA to a specific serine of apo-ACP by AcpS. This modification is essential for activity because fatty acids are bound in thioester linkage to the sulfhydryl of the prosthetic group.

Its subcellular location is the cytoplasm. The protein operates within lipid metabolism; fatty acid biosynthesis. Its function is as follows. Carrier of the growing fatty acid chain in fatty acid biosynthesis. The chain is Acyl carrier protein from Methylobacterium radiotolerans (strain ATCC 27329 / DSM 1819 / JCM 2831 / NBRC 15690 / NCIMB 10815 / 0-1).